Consider the following 476-residue polypeptide: Neuropeptide receptor 18 (476 aa).

Over 1 to 61 the chain is Extracellular; sequence MSSFYNEAKF…LSNHDNSSLM (61 aa). Asn43 and Asn57 each carry an N-linked (GlcNAc...) asparagine glycan. Residues 62 to 82 traverse the membrane as a helical segment; the sequence is LIAGFYALLFMFGTCGNAAIL. The Cytoplasmic segment spans residues 83–102; that stretch reads AVVHHVKGQDPRSRHNTTLT. Residues 103–123 form a helical membrane-spanning segment; it reads YICILSIVDFLSMLPIPMTII. The Extracellular segment spans residues 124–139; that stretch reads DQILGFWMFDTFACKL. A disulfide bridge links Cys137 with Cys228. Residues 140 to 160 traverse the membrane as a helical segment; the sequence is FRLLEHIGKIFSTFILVAFSI. The Cytoplasmic portion of the chain corresponds to 161-179; sequence DRYCAVCHPLQVRVRNQRT. A helical transmembrane segment spans residues 180-200; that stretch reads VFVFLGIMFFVTCVMLSPILL. Residues 201 to 236 lie on the Extracellular side of the membrane; that stretch reads YAHSKELVMHEKVDLDQEVITRMHLYKCVDDLGREL. The chain crosses the membrane as a helical span at residues 237-257; the sequence is FVVFTLYSFVLAYLMPLLFMI. The Cytoplasmic segment spans residues 258–291; sequence YFYYEMLIRLFKQANVIKQTLVGRRSGGEEKKLT. A helical transmembrane segment spans residues 292–312; that stretch reads IPVGHIAIYTLAICSFHFICW. Residues 313–334 lie on the Extracellular side of the membrane; it reads TPYWISILYSLYEELYQDTKST. Residues 335-355 form a helical membrane-spanning segment; that stretch reads ASPPTYAFIYFMYGVHALPYI. At 356 to 476 the chain is on the cytoplasmic side; that stretch reads NSASNFILYG…ITPDTESVIL (121 aa).

Belongs to the G-protein coupled receptor 1 family. As to expression, expressed in sensory neurons including ASER.

The protein localises to the cell membrane. Functionally, probable receptor for neuropeptide ligand nlp-9 that plays a role in octopamine signaling and specifically, the octapamine inhibition of aversion responses in olfactory sensory neurons. In AWB olfactory sensory neurons, required for the detection of preferred food sources. The polypeptide is Neuropeptide receptor 18 (Caenorhabditis elegans).